A 369-amino-acid chain; its full sequence is Phospho-N-acetylmuramoyl-pentapeptide-transferase (369 aa).

10 helical membrane passes run 2–22 (IALL…TPLF), 55–75 (TVVV…MFLM), 86–106 (ALIL…DDFI), 120–140 (AKLI…LNFP), 163–183 (LAFG…NLIV), 196–216 (LDGL…LMGI), 239–259 (PLDL…FLWW), 266–286 (IFMG…FAIL), 291–311 (LLLG…IIQV), and 348–368 (ILGG…WVVL).

Belongs to the glycosyltransferase 4 family. MraY subfamily. It depends on Mg(2+) as a cofactor.

It is found in the cell membrane. The catalysed reaction is UDP-N-acetyl-alpha-D-muramoyl-L-alanyl-gamma-D-glutamyl-meso-2,6-diaminopimeloyl-D-alanyl-D-alanine + di-trans,octa-cis-undecaprenyl phosphate = di-trans,octa-cis-undecaprenyl diphospho-N-acetyl-alpha-D-muramoyl-L-alanyl-D-glutamyl-meso-2,6-diaminopimeloyl-D-alanyl-D-alanine + UMP. It participates in cell wall biogenesis; peptidoglycan biosynthesis. Its function is as follows. Catalyzes the initial step of the lipid cycle reactions in the biosynthesis of the cell wall peptidoglycan: transfers peptidoglycan precursor phospho-MurNAc-pentapeptide from UDP-MurNAc-pentapeptide onto the lipid carrier undecaprenyl phosphate, yielding undecaprenyl-pyrophosphoryl-MurNAc-pentapeptide, known as lipid I. The sequence is that of Phospho-N-acetylmuramoyl-pentapeptide-transferase from Pseudarthrobacter chlorophenolicus (strain ATCC 700700 / DSM 12829 / CIP 107037 / JCM 12360 / KCTC 9906 / NCIMB 13794 / A6) (Arthrobacter chlorophenolicus).